A 51-amino-acid chain; its full sequence is Large ribosomal subunit protein eL39 (51 aa).

Belongs to the eukaryotic ribosomal protein eL39 family. As to quaternary structure, interacts with YIH1.

The chain is Large ribosomal subunit protein eL39 (RPL39) from Kluyveromyces lactis (strain ATCC 8585 / CBS 2359 / DSM 70799 / NBRC 1267 / NRRL Y-1140 / WM37) (Yeast).